A 299-amino-acid chain; its full sequence is tRNA dimethylallyltransferase (299 aa).

An ATP-binding site is contributed by 11–18 (GPTGSGKS). 13-18 (TGSGKS) contributes to the substrate binding site.

It belongs to the IPP transferase family. In terms of assembly, monomer. The cofactor is Mg(2+).

The enzyme catalyses adenosine(37) in tRNA + dimethylallyl diphosphate = N(6)-dimethylallyladenosine(37) in tRNA + diphosphate. Functionally, catalyzes the transfer of a dimethylallyl group onto the adenine at position 37 in tRNAs that read codons beginning with uridine, leading to the formation of N6-(dimethylallyl)adenosine (i(6)A). This chain is tRNA dimethylallyltransferase, found in Pseudarthrobacter chlorophenolicus (strain ATCC 700700 / DSM 12829 / CIP 107037 / JCM 12360 / KCTC 9906 / NCIMB 13794 / A6) (Arthrobacter chlorophenolicus).